Reading from the N-terminus, the 135-residue chain is Global transcriptional regulator Spx 2 (135 aa).

Cys-10 is a catalytic residue.

It belongs to the ArsC family. Spx subfamily. In terms of assembly, interacts with the C-terminal domain of the alpha subunit of the RNAP.

It localises to the cytoplasm. Its function is as follows. Global transcriptional regulator that plays a key role in stress response and exerts either positive or negative regulation of genes. Acts by interacting with the C-terminal domain of the alpha subunit of the RNA polymerase (RNAP). This interaction can enhance binding of RNAP to the promoter region of target genes and stimulate their transcription, or block interaction of RNAP with activator. The polypeptide is Global transcriptional regulator Spx 2 (Oceanobacillus iheyensis (strain DSM 14371 / CIP 107618 / JCM 11309 / KCTC 3954 / HTE831)).